The sequence spans 338 residues: Ferredoxin--NADP reductase (338 aa).

Residues aspartate 36, glutamine 44, tyrosine 49, valine 89, phenylalanine 123, aspartate 290, and threonine 331 each coordinate FAD.

The protein belongs to the ferredoxin--NADP reductase type 2 family. As to quaternary structure, homodimer. FAD serves as cofactor.

It carries out the reaction 2 reduced [2Fe-2S]-[ferredoxin] + NADP(+) + H(+) = 2 oxidized [2Fe-2S]-[ferredoxin] + NADPH. The polypeptide is Ferredoxin--NADP reductase (Anaplasma phagocytophilum (strain HZ)).